Here is a 347-residue protein sequence, read N- to C-terminus: Circulating cathodic antigen (347 aa).

Residues 76–109 (ICLAAENKQLEQLKIENKTLRNSLDEHQTALDMI) are a coiled coil. The interval 149–177 (PGPKSVNTPSTNSIDSQSVSQKSNSGKVD) is disordered. The segment covering 153 to 174 (SVNTPSTNSIDSQSVSQKSNSG) has biased composition (polar residues). Positions 206–233 (DAYATELEEELHRLRSENAGLREILMIS) form a coiled coil. Residues 303 to 332 (LYNIPNPSDDSSNSGTISGNHSDEDSDEDD) are disordered. A compositionally biased stretch (low complexity) spans 307-316 (PNPSDDSSNS).

Belongs to the SIKE family. O-glycosylated.

In terms of biological role, involved in protection of the schistosome gut. This chain is Circulating cathodic antigen, found in Schistosoma mansoni (Blood fluke).